The following is a 1344-amino-acid chain: DEAD-box ATP-dependent RNA helicase FANCM (1344 aa).

Residues Ser39–Lys61 form a disordered region. The Helicase ATP-binding domain occupies Ile124–Thr292. Leu137–Thr144 contributes to the ATP binding site. The DEAH box signature appears at Asp240–His243. The Helicase C-terminal domain occupies Lys450–Met621. Disordered stretches follow at residues Val765 to Glu790, Glu1110 to Glu1148, Tyr1183 to Asp1218, and Lys1307 to Trp1344. The segment covering Ser1118–Ile1135 has biased composition (acidic residues). Residues Thr1207–Asp1218 are compositionally biased toward polar residues. Residues Gln1308–Ala1318 show a composition bias toward basic and acidic residues.

Belongs to the DEAD box helicase family. DEAH subfamily. FANCM sub-subfamily.

It localises to the nucleus. It catalyses the reaction ATP + H2O = ADP + phosphate + H(+). Involved in ordered homologous recombination (HR) events in somatic and meiotic cells. Involved in the suppression of spontaneous HR events in somatic cells. Has an opposite function to the DNA binding cofactor MHF1 which promotes spontaneous HR. Functions in replicative repair independently of MHF1 and in a parallel pathway to the endonuclease MUS81. Acts in the same pathway as the two DNA-binding cofactors MHF1 and MHF2 to restrain class II meiotic crossover (CO), and acts exclusively with MHF1 and MHF2 during meiosis to repair DNA interstrand cross-links (ICLs). This common pathway is in parallel to the pathway that involves the RECQ4A helicase. Seems to be involved in the stabilization of recombination intermediates. Involved in DNA double-strand break (DSB) repair during meiosis. Required for synthesis-dependent strand annealing (SDSA) and to a lesser extent for single-strand annealing (SSA). May process meiotic DSB repair intermediates, possibly D-loops, driving them toward noncrossover (NCO) resolution. This Arabidopsis thaliana (Mouse-ear cress) protein is DEAD-box ATP-dependent RNA helicase FANCM.